We begin with the raw amino-acid sequence, 147 residues long: 3-dehydroquinate dehydratase (147 aa).

Catalysis depends on tyrosine 23, which acts as the Proton acceptor. Substrate-binding residues include asparagine 75, histidine 81, and aspartate 88. Residue histidine 101 is the Proton donor of the active site. Substrate contacts are provided by residues 102–103 (LS) and arginine 112.

It belongs to the type-II 3-dehydroquinase family. As to quaternary structure, homododecamer.

The enzyme catalyses 3-dehydroquinate = 3-dehydroshikimate + H2O. It participates in metabolic intermediate biosynthesis; chorismate biosynthesis; chorismate from D-erythrose 4-phosphate and phosphoenolpyruvate: step 3/7. In terms of biological role, catalyzes a trans-dehydration via an enolate intermediate. The polypeptide is 3-dehydroquinate dehydratase (Stenotrophomonas maltophilia (strain K279a)).